Here is a 101-residue protein sequence, read N- to C-terminus: Small ribosomal subunit protein bS6 (101 aa).

The protein belongs to the bacterial ribosomal protein bS6 family.

In terms of biological role, binds together with bS18 to 16S ribosomal RNA. This Oleidesulfovibrio alaskensis (strain ATCC BAA-1058 / DSM 17464 / G20) (Desulfovibrio alaskensis) protein is Small ribosomal subunit protein bS6.